The primary structure comprises 481 residues: Amino acid permease 6 (481 aa).

Topologically, residues 1–36 (MEKKKSMFVEQSFPEHEIGDTNKNFDEDGRDKRTGT) are cytoplasmic. 2 helical membrane-spanning segments follow: residues 37-57 (WMTG…LSLA) and 58-78 (WAIA…FSFI). Topologically, residues 79 to 125 (TYFTSTMLADCYRSPDPVTGKRNYTYMEVVRSYLGGRKVQLCGLAQY) are cytoplasmic. The chain crosses the membrane as a helical span at residues 126–146 (GNLIGITIGYTITASISMVAV). Residues 147–167 (KRSNCFHKNGHNVKCATSNTP) lie on the Extracellular side of the membrane. A helical transmembrane segment spans residues 168 to 188 (FMIIFAIIQIILSQIPNFHNL). Topologically, residues 189–190 (SW) are cytoplasmic. A helical transmembrane segment spans residues 191-211 (LSILAAVMSFCYASIGVGLSI). Residues 212–242 (AKAAGGGEHVRTTLTGVTVGIDVSGAEKIWR) are Extracellular-facing. The chain crosses the membrane as a helical span at residues 243-263 (TFQAIGDIAFAYAYSTVLIEI). Residues 264-283 (QDTLKAGPPSENKAMKRASL) lie on the Cytoplasmic side of the membrane. Residues 284-304 (VGVSTTTFFYMLCGCVGYAAF) traverse the membrane as a helical segment. The Extracellular portion of the chain corresponds to 305–321 (GNDAPGNFLTGFGFYEP). The helical transmembrane segment at 322-342 (FWLIDFANVCIAVHLIGAYQV) threads the bilayer. Topologically, residues 343–385 (FCQPIFQFVESQSAKRWPDNKFITGEYKIHVPCCGDFSINFLR) are cytoplasmic. Residues 386-405 (LVWRTSYVVVTAVVAMIFPF) form a helical membrane-spanning segment. The Extracellular portion of the chain corresponds to 406–408 (FND). A helical membrane pass occupies residues 409 to 427 (FLGLIGAASFWPLTVYFPI). Topologically, residues 428–447 (EMHIAQKKIPKFSFTWTWLK) are cytoplasmic. A helical transmembrane segment spans residues 448–468 (ILSWTCFIVSLVAAAGSVQGL). Residues 469–481 (IQSLKDFKPFQAP) lie on the Extracellular side of the membrane.

It belongs to the amino acid/polyamine transporter 2 family. Amino acid/auxin permease (AAAP) (TC 2.A.18.2) subfamily. As to expression, expressed in roots and leaves, and at lower levels in stems and flowers. Found in the xylem parenchyma.

It localises to the cell membrane. Amino acid-proton symporter. Stereospecific transporter with a broad specificity for tryptophan, proline, and neutral and acidic amino acids. Has an affinity for aspartate in a physiological range. Involved in the uptake of amino acids diffusing out of the xylem tracheids into the xylem parenchyma. The protein is Amino acid permease 6 (AAP6) of Arabidopsis thaliana (Mouse-ear cress).